The sequence spans 476 residues: Glycogen synthase (476 aa).

An ADP-alpha-D-glucose-binding site is contributed by K15.

The protein belongs to the glycosyltransferase 1 family. Bacterial/plant glycogen synthase subfamily.

The catalysed reaction is [(1-&gt;4)-alpha-D-glucosyl](n) + ADP-alpha-D-glucose = [(1-&gt;4)-alpha-D-glucosyl](n+1) + ADP + H(+). It participates in glycan biosynthesis; glycogen biosynthesis. In terms of biological role, synthesizes alpha-1,4-glucan chains using ADP-glucose. In Halalkalibacterium halodurans (strain ATCC BAA-125 / DSM 18197 / FERM 7344 / JCM 9153 / C-125) (Bacillus halodurans), this protein is Glycogen synthase.